We begin with the raw amino-acid sequence, 216 residues long: Probable GTP-binding protein EngB (216 aa).

Positions 24–205 constitute an EngB-type G domain; that stretch reads ATPEIAFVGR…WARLAALAAE (182 aa). GTP-binding positions include 32 to 39, 59 to 63, 86 to 89, 153 to 156, and 184 to 186; these read GRSNVGKS, GRTRA, DLPG, TKTD, and FSA. 2 residues coordinate Mg(2+): Ser39 and Thr61.

Belongs to the TRAFAC class TrmE-Era-EngA-EngB-Septin-like GTPase superfamily. EngB GTPase family. Mg(2+) is required as a cofactor.

Its function is as follows. Necessary for normal cell division and for the maintenance of normal septation. This chain is Probable GTP-binding protein EngB, found in Anaeromyxobacter dehalogenans (strain 2CP-1 / ATCC BAA-258).